A 396-amino-acid polypeptide reads, in one-letter code: Elongation factor Tu 1 (396 aa).

The tr-type G domain occupies 10 to 206 (KPHCNIGTIG…TVDDYIPQPD (197 aa)). A G1 region spans residues 19–26 (GHVDHGKT). 19 to 26 (GHVDHGKT) is a binding site for GTP. A Mg(2+)-binding site is contributed by Thr26. Residues 60–64 (GITIN) form a G2 region. Residues 81–84 (DCPG) are G3. Residues 81–85 (DCPGH) and 136–139 (NKVD) each bind GTP. Residues 136 to 139 (NKVD) are G4. The interval 174-176 (SAK) is G5.

Belongs to the TRAFAC class translation factor GTPase superfamily. Classic translation factor GTPase family. EF-Tu/EF-1A subfamily. As to quaternary structure, monomer.

It is found in the cytoplasm. The enzyme catalyses GTP + H2O = GDP + phosphate + H(+). In terms of biological role, GTP hydrolase that promotes the GTP-dependent binding of aminoacyl-tRNA to the A-site of ribosomes during protein biosynthesis. In Caulobacter sp. (strain K31), this protein is Elongation factor Tu 1.